A 425-amino-acid chain; its full sequence is Glutamyl-tRNA reductase (425 aa).

Substrate-binding positions include threonine 49–arginine 52, serine 107, glutamate 112–glutamine 114, and glutamine 118. The active-site Nucleophile is the cysteine 50. Residue glycine 187–isoleucine 192 participates in NADP(+) binding.

The protein belongs to the glutamyl-tRNA reductase family. As to quaternary structure, homodimer.

The catalysed reaction is (S)-4-amino-5-oxopentanoate + tRNA(Glu) + NADP(+) = L-glutamyl-tRNA(Glu) + NADPH + H(+). It functions in the pathway porphyrin-containing compound metabolism; protoporphyrin-IX biosynthesis; 5-aminolevulinate from L-glutamyl-tRNA(Glu): step 1/2. Catalyzes the NADPH-dependent reduction of glutamyl-tRNA(Glu) to glutamate 1-semialdehyde (GSA). The chain is Glutamyl-tRNA reductase from Pseudomonas savastanoi pv. phaseolicola (strain 1448A / Race 6) (Pseudomonas syringae pv. phaseolicola (strain 1448A / Race 6)).